A 72-amino-acid polypeptide reads, in one-letter code: MVDKRNHYFLLHKIEELLELSASKYKTTMEIANYAKKTKNRNANKSNIKPVILAILEISGELKLNDINKLTN.

Belongs to the RNA polymerase subunit omega family.

Its subcellular location is the plastid. It localises to the chloroplast. It catalyses the reaction RNA(n) + a ribonucleoside 5'-triphosphate = RNA(n+1) + diphosphate. Functionally, may be involved in RNA polymerase activity. The sequence is that of Putative DNA-directed RNA polymerase subunit omega (rpoZ) from Cyanidium caldarium (Red alga).